Consider the following 362-residue polypeptide: MATAVSAAVSLPSSKSTSFSSRTSIISTDKINFNKVPLYYRNVSGGSRLVSIRAQVTTEAPAKVEKISKKQDEGVIVNKFRPKEPYVGRCLLNTKITGDDAPGETWHMVFSTEGEVPYREGQSIGVIADGVDANGKPHKLRLYSTASSALGDFGDSKTVSLCVKRLVYTNDKGEEVKGVCSNFLCDLKPGAEVKITGPVGKEMLMPKDPNATVIMLATGTGIAPFRSFLWKMFFEKHEDYKFNGTAWLFLGVPTSSSLLYKEEFEKMKEKAPENFRLDFAVSREQTNEKGEKMYIQTRMAQYAEELWTLLQKDNTFIYMCGLKGMEQGIDEIMSALAERDGIVWADYKKQLKKAEQWNVEVY.

The disordered stretch occupies residues Met1–Ser20. The transit peptide at Met1–Ala62 directs the protein to the chloroplast. Residues Ser10 to Ser20 show a composition bias toward low complexity. One can recognise an FAD-binding FR-type domain in the interval Lys83–Met205. Residues Arg141–Ser144, Cys162–Lys164, Tyr168, Val179–Ser181, and Thr220 contribute to the FAD site. Ser144 and Lys164 together coordinate NADP(+). Residues Thr220, Val252–Pro253, Ser282–Arg283, Lys292, Gly321–Leu322, and Glu360 each bind NADP(+).

The protein belongs to the ferredoxin--NADP reductase type 1 family. Requires FAD as cofactor.

The protein resides in the plastid. Its subcellular location is the chloroplast stroma. It is found in the chloroplast thylakoid membrane. It catalyses the reaction 2 reduced [2Fe-2S]-[ferredoxin] + NADP(+) + H(+) = 2 oxidized [2Fe-2S]-[ferredoxin] + NADPH. It functions in the pathway energy metabolism; photosynthesis. In terms of biological role, may play a key role in regulating the relative amounts of cyclic and non-cyclic electron flow to meet the demands of the plant for ATP and reducing power. In Nicotiana tabacum (Common tobacco), this protein is Ferredoxin--NADP reductase, leaf-type isozyme, chloroplastic (PETH).